A 461-amino-acid polypeptide reads, in one-letter code: Methylenetetrahydrofolate--tRNA-(uracil-5-)-methyltransferase TrmFO (461 aa).

FAD is bound at residue 16 to 21 (GAGLAG).

Belongs to the MnmG family. TrmFO subfamily. FAD serves as cofactor.

The protein localises to the cytoplasm. It carries out the reaction uridine(54) in tRNA + (6R)-5,10-methylene-5,6,7,8-tetrahydrofolate + NADH + H(+) = 5-methyluridine(54) in tRNA + (6S)-5,6,7,8-tetrahydrofolate + NAD(+). It catalyses the reaction uridine(54) in tRNA + (6R)-5,10-methylene-5,6,7,8-tetrahydrofolate + NADPH + H(+) = 5-methyluridine(54) in tRNA + (6S)-5,6,7,8-tetrahydrofolate + NADP(+). In terms of biological role, catalyzes the folate-dependent formation of 5-methyl-uridine at position 54 (M-5-U54) in all tRNAs. This Parasynechococcus marenigrum (strain WH8102) protein is Methylenetetrahydrofolate--tRNA-(uracil-5-)-methyltransferase TrmFO.